A 753-amino-acid polypeptide reads, in one-letter code: 5-methyltetrahydropteroyltriglutamate--homocysteine methyltransferase (753 aa).

5-methyltetrahydropteroyltri-L-glutamate-binding positions include 17-20 and lysine 117; that span reads RELK. Residues 431–433 and glutamate 484 contribute to the L-homocysteine site; that span reads IGS. L-methionine-binding positions include 431–433 and glutamate 484; that span reads IGS. Residues 515-516 and tryptophan 561 contribute to the 5-methyltetrahydropteroyltri-L-glutamate site; that span reads RC. Aspartate 599 is a binding site for L-homocysteine. Residue aspartate 599 participates in L-methionine binding. Glutamate 605 is a 5-methyltetrahydropteroyltri-L-glutamate binding site. Residues histidine 641, cysteine 643, and glutamate 665 each coordinate Zn(2+). Residue histidine 694 is the Proton donor of the active site. Residue cysteine 726 coordinates Zn(2+).

It belongs to the vitamin-B12 independent methionine synthase family. Zn(2+) serves as cofactor.

It catalyses the reaction 5-methyltetrahydropteroyltri-L-glutamate + L-homocysteine = tetrahydropteroyltri-L-glutamate + L-methionine. Its pathway is amino-acid biosynthesis; L-methionine biosynthesis via de novo pathway; L-methionine from L-homocysteine (MetE route): step 1/1. Functionally, catalyzes the transfer of a methyl group from 5-methyltetrahydrofolate to homocysteine resulting in methionine formation. This chain is 5-methyltetrahydropteroyltriglutamate--homocysteine methyltransferase, found in Escherichia coli O6:H1 (strain CFT073 / ATCC 700928 / UPEC).